The chain runs to 411 residues: MPETEHETCSKEWLQSQLRSLDSKDLILLDCRGSHEYSESHIRGAVNLCIPSIVLRRLAVGKIDLASTIKSPELKQRIQSGYKLCWFILYNGEGVPGQNQEIAGAGSLAVAMDSIISILHRRLKQDGCRVVALQDGFNNFRQAFPEWCEDDNQTHSKEIESSRNVQTDQLMGLRSLRISTTQSDSACSSSAESSDCESSSHHHHHHSHHNYNEAPVEIIPGLLFLGNATHSCDSEALKKYNIKYVLNVTPDLPNKFKESGDIKYLQIPITDHYSQDLAIHFPDAIQFIEEARSASSVVLVHCLAGVSRSVTVTLAYLMHTRGLSLNDAFAMVRDRKPDVSPNFHFMQQLLSFESQLRLRPGSRFSCSCIAPDCNCMQTTGFMATHLANATGVSPDSGIEFDRWTPSDTGLK.

The region spanning 22–149 (DSKDLILLDC…FRQAFPEWCE (128 aa)) is the Rhodanese domain. Low complexity predominate over residues 184–197 (DSACSSSAESSDCE). Positions 184–209 (DSACSSSAESSDCESSSHHHHHHSHH) are disordered. A Tyrosine-protein phosphatase domain is found at 214–358 (APVEIIPGLL…LLSFESQLRL (145 aa)). Cysteine 302 serves as the catalytic Phosphocysteine intermediate.

This sequence belongs to the protein-tyrosine phosphatase family. Non-receptor class dual specificity subfamily. As to quaternary structure, interacts (via N-terminal region) with phosphorylated rl. In terms of tissue distribution, ubiquitous expression in eye and wing imaginal disks. Enriched in ovary.

The protein resides in the cytoplasm. The catalysed reaction is O-phospho-L-tyrosyl-[protein] + H2O = L-tyrosyl-[protein] + phosphate. It catalyses the reaction O-phospho-L-seryl-[protein] + H2O = L-seryl-[protein] + phosphate. The enzyme catalyses O-phospho-L-threonyl-[protein] + H2O = L-threonyl-[protein] + phosphate. Its activity is regulated as follows. Activity abolished by tyrosine phosphatase inhibitor sodium vanadate. Activated by rl. Its function is as follows. Negatively regulates the activity of members of the MAP kinase family in response to changes in the cellular environment. Has a specificity for the ERK family. Acts as a negative regulator in a variety of developmental processes including cell differentiation and proliferation controlled by the Ras/ERK pathway. Suppresses the photoreceptor cell differentiation and wing vein formation. Required for proper oogenesis and early embryogenesis. Functions autonomously in a subset of photoreceptor progenitor cells in eye imaginal disks. Also appears to be required in surrounding non-neuronal cells for ommatidial patterning and photoreceptor differentiation. Plays a role in the maintenance of epithelial integrity during tracheal development. The polypeptide is Dual specificity protein phosphatase Mpk3 (Mkp3) (Drosophila melanogaster (Fruit fly)).